Here is a 419-residue protein sequence, read N- to C-terminus: Dimethylallyltryptophan synthase 1 (419 aa).

The L-tryptophan site is built by F81, M82, and E90. Residue F81 coordinates L-tyrosine. Residues R105, K187, Y189, R251, K253, and Y255 each contribute to the (2E)-geranyl diphosphate site. Dimethylallyl diphosphate-binding residues include R105, K187, Y189, R251, K253, and Y255. R257 provides a ligand contact to L-tryptophan. Residue R257 coordinates L-tyrosine. (2E)-geranyl diphosphate contacts are provided by K332 and Y334. Dimethylallyl diphosphate is bound by residues K332 and Y334. Y389 serves as a coordination point for L-tryptophan. Y389 serves as a coordination point for L-tyrosine. (2E)-geranyl diphosphate is bound at residue Y404.

The protein belongs to the tryptophan dimethylallyltransferase family.

It catalyses the reaction L-tyrosine + dimethylallyl diphosphate = 4-O-dimethylallyl-L-tyrosine + diphosphate. Dimethylallyltryptophan synthase; part of the DMATS1 gene cluster that mediates the biosynthesis of a reversely N-prenylated monomeric L-tryptophan (r-N-DMAT). DMATS1 catalyzes the reverse N-prenylation of L-Trp with DMAPP to yield N-dimethylallyl-L-tryptophan. DMATS1 exhibits unusually broad substrate specificity and can utilize geranyl diphosphate (GPP) or L-Tyr as an alternative prenyl donor or acceptor, respectively. Is able to catalyze both forward and reverse prenylation, i.e., at C1 or C3 of DMAPP; and it can catalyze C-N and C-O bond-forming reactions. The main product of the cluster is the reverse-N-dimethylallyl-L-tryptophan (r-N-DMAT) produced by the dimethylallyltryptophan synthase DMATS1 and it remains unclear whether this metabolite undergoes further modifications when silent gene clusters are activated. The acetylated form of r-N-DMAT, ac-r-N-DMAT, is also produced. The roles of the cytochrome P450 monooxygenase FFUJ_09176 and the methyltransferase FFUJ_09178 have still to be elucidated. In Gibberella fujikuroi (strain CBS 195.34 / IMI 58289 / NRRL A-6831) (Bakanae and foot rot disease fungus), this protein is Dimethylallyltryptophan synthase 1.